The chain runs to 297 residues: uncharacterized protein (297 aa).

7 WD repeats span residues 12 to 51 (KAKE…CIHE), 54 to 93 (GHGH…VDRR), 96 to 135 (GHLA…FSPI), 140 to 177 (DAKD…LSSD), 179 to 217 (FSHP…ILKS), 222 to 261 (KNME…QITS), and 265 to 297 (VGTP…YQYN).

This sequence belongs to the WD repeat MORG1 family.

The protein localises to the cytoplasm. It is found in the nucleus. This is an uncharacterized protein from Schizosaccharomyces pombe (strain 972 / ATCC 24843) (Fission yeast).